A 222-amino-acid polypeptide reads, in one-letter code: Deoxyribose-phosphate aldolase (222 aa).

D94 acts as the Proton donor/acceptor in catalysis. The active-site Schiff-base intermediate with acetaldehyde is K156. The Proton donor/acceptor role is filled by K185.

Belongs to the DeoC/FbaB aldolase family. DeoC type 1 subfamily.

Its subcellular location is the cytoplasm. The catalysed reaction is 2-deoxy-D-ribose 5-phosphate = D-glyceraldehyde 3-phosphate + acetaldehyde. It functions in the pathway carbohydrate degradation; 2-deoxy-D-ribose 1-phosphate degradation; D-glyceraldehyde 3-phosphate and acetaldehyde from 2-deoxy-alpha-D-ribose 1-phosphate: step 2/2. Catalyzes a reversible aldol reaction between acetaldehyde and D-glyceraldehyde 3-phosphate to generate 2-deoxy-D-ribose 5-phosphate. This Malacoplasma penetrans (strain HF-2) (Mycoplasma penetrans) protein is Deoxyribose-phosphate aldolase.